Here is a 340-residue protein sequence, read N- to C-terminus: Sideroflexin-5 (340 aa).

The next 4 membrane-spanning stretches (helical) occupy residues I103–L123, F163–V183, L254–L274, and L287–I307.

Belongs to the sideroflexin family. Primarily expressed in the brain.

It localises to the mitochondrion inner membrane. The catalysed reaction is citrate(in) = citrate(out). In terms of biological role, mitochondrial amino-acid transporter. Transports citrate. Does not act as a serine transporter: not able to mediate transport of serine into mitochondria. In brown adipose tissue, plays a role in the regulation of UCP1-dependent thermogenesis probably by supporting mitochondrial glycerol-3-phosphate utilization. This is Sideroflexin-5 from Homo sapiens (Human).